Reading from the N-terminus, the 896-residue chain is Alanine--tRNA ligase (896 aa).

The Zn(2+) site is built by H574, H578, C677, and H681.

It belongs to the class-II aminoacyl-tRNA synthetase family. It depends on Zn(2+) as a cofactor.

The protein localises to the cytoplasm. The enzyme catalyses tRNA(Ala) + L-alanine + ATP = L-alanyl-tRNA(Ala) + AMP + diphosphate. In terms of biological role, catalyzes the attachment of alanine to tRNA(Ala) in a two-step reaction: alanine is first activated by ATP to form Ala-AMP and then transferred to the acceptor end of tRNA(Ala). Also edits incorrectly charged Ser-tRNA(Ala) and Gly-tRNA(Ala) via its editing domain. In Mycoplasma mycoides subsp. mycoides SC (strain CCUG 32753 / NCTC 10114 / PG1), this protein is Alanine--tRNA ligase.